The chain runs to 140 residues: Fluoride-specific ion channel FluC 2 (140 aa).

4 helical membrane-spanning segments follow: residues 7 to 27, 45 to 65, 77 to 97, and 106 to 126; these read VPPL…LGAL, WATF…MVLV, PFAG…GLEI, and VLEA…GVVL. Na(+) contacts are provided by Gly-85 and Thr-88.

It belongs to the fluoride channel Fluc/FEX (TC 1.A.43) family.

It is found in the cell membrane. It catalyses the reaction fluoride(in) = fluoride(out). With respect to regulation, na(+) is not transported, but it plays an essential structural role and its presence is essential for fluoride channel function. In terms of biological role, fluoride-specific ion channel. Important for reducing fluoride concentration in the cell, thus reducing its toxicity. The polypeptide is Fluoride-specific ion channel FluC 2 (Nocardia farcinica (strain IFM 10152)).